Here is a 328-residue protein sequence, read N- to C-terminus: Ribosomal RNA small subunit methyltransferase H (328 aa).

S-adenosyl-L-methionine-binding positions include 37–39, D57, F83, D104, and Q111; that span reads GGH.

Belongs to the methyltransferase superfamily. RsmH family.

It localises to the cytoplasm. It catalyses the reaction cytidine(1402) in 16S rRNA + S-adenosyl-L-methionine = N(4)-methylcytidine(1402) in 16S rRNA + S-adenosyl-L-homocysteine + H(+). Specifically methylates the N4 position of cytidine in position 1402 (C1402) of 16S rRNA. The sequence is that of Ribosomal RNA small subunit methyltransferase H from Neisseria meningitidis serogroup A / serotype 4A (strain DSM 15465 / Z2491).